The sequence spans 202 residues: Ras-related protein Rab-2B (202 aa).

31–38 is a GTP binding site; the sequence is GDSAVGKS. The short motif at 53-61 is the Effector region element; sequence SDFTIGVEF. GTP is bound by residues 79 to 83 and 137 to 140; these read DTAGQ and NKAD.

This sequence belongs to the small GTPase superfamily. Rab family. This sequence lacks the C-terminal cysteine motifs subject to isoprenylation in other Rab proteins.

The protein is Ras-related protein Rab-2B (rab2B) of Dictyostelium discoideum (Social amoeba).